The primary structure comprises 876 residues: Valine--tRNA ligase (876 aa).

The 'HIGH' region signature appears at 43-53 (PNVTGVLHMGH). The 'KMSKS' region motif lies at 532 to 536 (KMSKS). Lys-535 lines the ATP pocket. Coiled coils occupy residues 805–826 (GNMI…HKEG) and 853–875 (RKKQ…SLKN).

The protein belongs to the class-I aminoacyl-tRNA synthetase family. ValS type 1 subfamily. As to quaternary structure, monomer.

It is found in the cytoplasm. It catalyses the reaction tRNA(Val) + L-valine + ATP = L-valyl-tRNA(Val) + AMP + diphosphate. Catalyzes the attachment of valine to tRNA(Val). As ValRS can inadvertently accommodate and process structurally similar amino acids such as threonine, to avoid such errors, it has a 'posttransfer' editing activity that hydrolyzes mischarged Thr-tRNA(Val) in a tRNA-dependent manner. In Bacteroides fragilis (strain ATCC 25285 / DSM 2151 / CCUG 4856 / JCM 11019 / LMG 10263 / NCTC 9343 / Onslow / VPI 2553 / EN-2), this protein is Valine--tRNA ligase.